Here is a 75-residue protein sequence, read N- to C-terminus: Small ribosomal subunit protein bS18 (75 aa).

This sequence belongs to the bacterial ribosomal protein bS18 family. As to quaternary structure, part of the 30S ribosomal subunit. Forms a tight heterodimer with protein bS6.

In terms of biological role, binds as a heterodimer with protein bS6 to the central domain of the 16S rRNA, where it helps stabilize the platform of the 30S subunit. The polypeptide is Small ribosomal subunit protein bS18 (Thermosipho melanesiensis (strain DSM 12029 / CIP 104789 / BI429)).